A 208-amino-acid polypeptide reads, in one-letter code: Glycerol-3-phosphate acyltransferase (208 aa).

Helical transmembrane passes span 3-23, 55-75, 81-101, 113-133, and 155-175; these read IIIM…VIIG, IVMV…TLLF, YTLL…YIGF, ILLA…LLLV, and IFYY…LFIF.

The protein belongs to the PlsY family. Probably interacts with PlsX.

The protein localises to the cell membrane. The catalysed reaction is an acyl phosphate + sn-glycerol 3-phosphate = a 1-acyl-sn-glycero-3-phosphate + phosphate. The protein operates within lipid metabolism; phospholipid metabolism. Functionally, catalyzes the transfer of an acyl group from acyl-phosphate (acyl-PO(4)) to glycerol-3-phosphate (G3P) to form lysophosphatidic acid (LPA). This enzyme utilizes acyl-phosphate as fatty acyl donor, but not acyl-CoA or acyl-ACP. The polypeptide is Glycerol-3-phosphate acyltransferase (Lactiplantibacillus plantarum (strain ATCC BAA-793 / NCIMB 8826 / WCFS1) (Lactobacillus plantarum)).